A 271-amino-acid polypeptide reads, in one-letter code: Phosphoglycerate mutase-like protein (271 aa).

Histidine 22 (tele-phosphohistidine intermediate) is an active-site residue. The active-site Proton donor/acceptor is glutamate 134. Positions 252–271 (SAETTNYPGKVPEGLDNPSG) are disordered.

It belongs to the phosphoglycerate mutase family. As to expression, expressed in the shoot apical meristem and meristematic zone of the root tips.

Its function is as follows. May play a role in carbohydrates metabolism. This is Phosphoglycerate mutase-like protein from Arabidopsis thaliana (Mouse-ear cress).